The following is a 358-amino-acid chain: Protein RecA (358 aa).

Position 67–74 (67–74) interacts with ATP; the sequence is GPESSGKT.

This sequence belongs to the RecA family.

The protein resides in the cytoplasm. Can catalyze the hydrolysis of ATP in the presence of single-stranded DNA, the ATP-dependent uptake of single-stranded DNA by duplex DNA, and the ATP-dependent hybridization of homologous single-stranded DNAs. It interacts with LexA causing its activation and leading to its autocatalytic cleavage. The chain is Protein RecA from Xenorhabdus bovienii (Xenorhabdus nematophila subsp. bovienii).